A 180-amino-acid chain; its full sequence is ATP-dependent protease subunit HslV (180 aa).

Residue Thr-7 is part of the active site. Residues Gly-165, Cys-168, and Thr-171 each coordinate Na(+).

The protein belongs to the peptidase T1B family. HslV subfamily. In terms of assembly, a double ring-shaped homohexamer of HslV is capped on each side by a ring-shaped HslU homohexamer. The assembly of the HslU/HslV complex is dependent on binding of ATP.

It is found in the cytoplasm. The catalysed reaction is ATP-dependent cleavage of peptide bonds with broad specificity.. Its activity is regulated as follows. Allosterically activated by HslU binding. Functionally, protease subunit of a proteasome-like degradation complex believed to be a general protein degrading machinery. The sequence is that of ATP-dependent protease subunit HslV from Bacillus anthracis (strain A0248).